The following is a 183-amino-acid chain: Guanylate kinase (183 aa).

Residues 4–182 form the Guanylate kinase-like domain; the sequence is GRVVVLTGPS…AITALEAAIF (179 aa). 11 to 18 serves as a coordination point for ATP; that stretch reads GPSGVGKG.

Belongs to the guanylate kinase family.

It is found in the cytoplasm. The enzyme catalyses GMP + ATP = GDP + ADP. The catalysed reaction is dZMP + ATP = dZDP + ADP. It functions in the pathway purine metabolism. Its function is as follows. Essential for recycling GMP and indirectly, cGMP. (Microbial infection) Catalyzes the phosphorylation of dZMP to dZDP, when the bacterium is infected by a phage that produces the substrate for the synthesis of dZTP (2- amino-2'-deoxyadenosine 5'-triphosphate), which is then used by the phage as a DNA polymerase substrate. This Synechococcus sp. (strain ATCC 27144 / PCC 6301 / SAUG 1402/1) (Anacystis nidulans) protein is Guanylate kinase.